A 351-amino-acid chain; its full sequence is UDP-N-acetylenolpyruvoylglucosamine reductase (351 aa).

Residues 25-196 (HIQAQARWLL…TAVEFRLPLL (172 aa)) enclose the FAD-binding PCMH-type domain. Residue R173 is part of the active site. Residue S246 is the Proton donor of the active site. Residue E343 is part of the active site.

Belongs to the MurB family. It depends on FAD as a cofactor.

Its subcellular location is the cytoplasm. It carries out the reaction UDP-N-acetyl-alpha-D-muramate + NADP(+) = UDP-N-acetyl-3-O-(1-carboxyvinyl)-alpha-D-glucosamine + NADPH + H(+). It functions in the pathway cell wall biogenesis; peptidoglycan biosynthesis. Functionally, cell wall formation. The polypeptide is UDP-N-acetylenolpyruvoylglucosamine reductase (Xylella fastidiosa (strain M23)).